The sequence spans 481 residues: Protein nucleotidyltransferase YdiU (481 aa).

Residues Gly85, Gly87, Arg88, Lys108, Asp120, Gly121, Arg172, and Arg179 each contribute to the ATP site. Asp248 acts as the Proton acceptor in catalysis. Residues Asn249 and Asp258 each coordinate Mg(2+). Position 258 (Asp258) interacts with ATP.

It belongs to the SELO family. The cofactor is Mg(2+). Requires Mn(2+) as cofactor.

The catalysed reaction is L-seryl-[protein] + ATP = 3-O-(5'-adenylyl)-L-seryl-[protein] + diphosphate. It carries out the reaction L-threonyl-[protein] + ATP = 3-O-(5'-adenylyl)-L-threonyl-[protein] + diphosphate. The enzyme catalyses L-tyrosyl-[protein] + ATP = O-(5'-adenylyl)-L-tyrosyl-[protein] + diphosphate. It catalyses the reaction L-histidyl-[protein] + UTP = N(tele)-(5'-uridylyl)-L-histidyl-[protein] + diphosphate. The catalysed reaction is L-seryl-[protein] + UTP = O-(5'-uridylyl)-L-seryl-[protein] + diphosphate. It carries out the reaction L-tyrosyl-[protein] + UTP = O-(5'-uridylyl)-L-tyrosyl-[protein] + diphosphate. Functionally, nucleotidyltransferase involved in the post-translational modification of proteins. It can catalyze the addition of adenosine monophosphate (AMP) or uridine monophosphate (UMP) to a protein, resulting in modifications known as AMPylation and UMPylation. The protein is Protein nucleotidyltransferase YdiU of Cereibacter sphaeroides (strain ATCC 17025 / ATH 2.4.3) (Rhodobacter sphaeroides).